The following is a 151-amino-acid chain: Deoxyuridine 5'-triphosphate nucleotidohydrolase (151 aa).

Substrate is bound by residues 70 to 72 (RSG), Asn-83, 87 to 89 (LID), and Met-97.

Belongs to the dUTPase family. Mg(2+) is required as a cofactor.

It carries out the reaction dUTP + H2O = dUMP + diphosphate + H(+). It participates in pyrimidine metabolism; dUMP biosynthesis; dUMP from dCTP (dUTP route): step 2/2. This enzyme is involved in nucleotide metabolism: it produces dUMP, the immediate precursor of thymidine nucleotides and it decreases the intracellular concentration of dUTP so that uracil cannot be incorporated into DNA. The polypeptide is Deoxyuridine 5'-triphosphate nucleotidohydrolase (Sodalis glossinidius (strain morsitans)).